The primary structure comprises 144 residues: Cytochrome c3 (144 aa).

Positions 1-24 (MRYLVISLFAVSLLMAGSALVGNA) are cleaved as a signal peptide. The heme c site is built by histidine 51, histidine 54, cysteine 59, cysteine 62, histidine 63, histidine 64, cysteine 76, cysteine 81, histidine 82, histidine 100, cysteine 108, cysteine 111, histidine 112, cysteine 125, cysteine 128, and histidine 129.

It belongs to the cytochrome c family. Homodimer. Heterotrimer of cytochrome c3 FDH2C and formate dehydrogenase FDH2 alpha and beta subunits that forms the FdhABC(3) complex. Post-translationally, binds 4 heme c groups per subunit.

The protein resides in the periplasm. In terms of biological role, participates in sulfate respiration coupled with phosphorylation by transferring electrons from the enzyme dehydrogenase to ferredoxin. Gamma chain of the formate dehydrogenase (FDH) that catalyzes the reversible two-electron oxidation of formate to carbon dioxide. The gamma subunit of formate dehydrogenase forms a c-type heme. This chain is Cytochrome c3, found in Nitratidesulfovibrio vulgaris (strain ATCC 29579 / DSM 644 / CCUG 34227 / NCIMB 8303 / VKM B-1760 / Hildenborough) (Desulfovibrio vulgaris).